Here is a 117-residue protein sequence, read N- to C-terminus: Immunoglobulin kappa variable 1-12 (117 aa).

The signal sequence occupies residues 1–22 (MDMRVPAQLLGLLLLWFPGSRC). The segment at 23–45 (DIQMTQSPSSVSASVGDRVTITC) is framework-1. In terms of domain architecture, Ig-like spans 24 to 117 (IQMTQSPSSV…YYCQQANSFP (94 aa)). Cysteines 45 and 110 form a disulfide. Positions 46-56 (RASQGISSWLA) are complementarity-determining-1. Residues 57–71 (WYQQKPGKAPKLLIY) form a framework-2 region. Residues 72 to 78 (AASSLQS) are complementarity-determining-2. Positions 79-110 (GVPSRFSGSGSGTDFTLTISSLQPEDFATYYC) are framework-3. Residues 111–117 (QQANSFP) form a complementarity-determining-3 region.

In terms of assembly, immunoglobulins are composed of two identical heavy chains and two identical light chains; disulfide-linked.

Its subcellular location is the secreted. It is found in the cell membrane. Functionally, v region of the variable domain of immunoglobulin light chains that participates in the antigen recognition. Immunoglobulins, also known as antibodies, are membrane-bound or secreted glycoproteins produced by B lymphocytes. In the recognition phase of humoral immunity, the membrane-bound immunoglobulins serve as receptors which, upon binding of a specific antigen, trigger the clonal expansion and differentiation of B lymphocytes into immunoglobulins-secreting plasma cells. Secreted immunoglobulins mediate the effector phase of humoral immunity, which results in the elimination of bound antigens. The antigen binding site is formed by the variable domain of one heavy chain, together with that of its associated light chain. Thus, each immunoglobulin has two antigen binding sites with remarkable affinity for a particular antigen. The variable domains are assembled by a process called V-(D)-J rearrangement and can then be subjected to somatic hypermutations which, after exposure to antigen and selection, allow affinity maturation for a particular antigen. The protein is Immunoglobulin kappa variable 1-12 of Homo sapiens (Human).